We begin with the raw amino-acid sequence, 397 residues long: Tryptophan synthase beta chain (397 aa).

The residue at position 86 (Lys-86) is an N6-(pyridoxal phosphate)lysine.

This sequence belongs to the TrpB family. As to quaternary structure, tetramer of two alpha and two beta chains. Pyridoxal 5'-phosphate serves as cofactor.

It catalyses the reaction (1S,2R)-1-C-(indol-3-yl)glycerol 3-phosphate + L-serine = D-glyceraldehyde 3-phosphate + L-tryptophan + H2O. It participates in amino-acid biosynthesis; L-tryptophan biosynthesis; L-tryptophan from chorismate: step 5/5. Functionally, the beta subunit is responsible for the synthesis of L-tryptophan from indole and L-serine. In Edwardsiella ictaluri (strain 93-146), this protein is Tryptophan synthase beta chain.